The primary structure comprises 517 residues: Aspartyl/glutamyl-tRNA(Asn/Gln) amidotransferase subunit B (517 aa).

The protein belongs to the GatB/GatE family. GatB subfamily. As to quaternary structure, heterotrimer of A, B and C subunits.

The catalysed reaction is L-glutamyl-tRNA(Gln) + L-glutamine + ATP + H2O = L-glutaminyl-tRNA(Gln) + L-glutamate + ADP + phosphate + H(+). The enzyme catalyses L-aspartyl-tRNA(Asn) + L-glutamine + ATP + H2O = L-asparaginyl-tRNA(Asn) + L-glutamate + ADP + phosphate + 2 H(+). Allows the formation of correctly charged Asn-tRNA(Asn) or Gln-tRNA(Gln) through the transamidation of misacylated Asp-tRNA(Asn) or Glu-tRNA(Gln) in organisms which lack either or both of asparaginyl-tRNA or glutaminyl-tRNA synthetases. The reaction takes place in the presence of glutamine and ATP through an activated phospho-Asp-tRNA(Asn) or phospho-Glu-tRNA(Gln). The protein is Aspartyl/glutamyl-tRNA(Asn/Gln) amidotransferase subunit B of Thermobifida fusca (strain YX).